Here is a 258-residue protein sequence, read N- to C-terminus: 5'-nucleotidase SurE (258 aa).

Asp9, Asp10, Ser42, and Asn96 together coordinate a divalent metal cation.

This sequence belongs to the SurE nucleotidase family. A divalent metal cation serves as cofactor.

The protein localises to the cytoplasm. It carries out the reaction a ribonucleoside 5'-phosphate + H2O = a ribonucleoside + phosphate. Nucleotidase that shows phosphatase activity on nucleoside 5'-monophosphates. The sequence is that of 5'-nucleotidase SurE from Campylobacter jejuni subsp. jejuni serotype O:23/36 (strain 81-176).